The sequence spans 96 residues: Large ribosomal subunit protein eL14 (96 aa).

Belongs to the eukaryotic ribosomal protein eL14 family.

The sequence is that of Large ribosomal subunit protein eL14 from Saccharolobus islandicus (strain M.14.25 / Kamchatka #1) (Sulfolobus islandicus).